Here is a 498-residue protein sequence, read N- to C-terminus: L-amino acid oxidase Cdc18 (498 aa).

A signal peptide spans Ser-1–Cys-2. A disulfide bond links Cys-12 and Cys-173. FAD is bound by residues Met-45 to Ala-46, Glu-65 to Ala-66, Arg-73, and Gly-87 to Arg-90. The substrate site is built by Arg-90 and His-223. Val-263 serves as a coordination point for FAD. Cys-333 and Cys-414 are oxidised to a cystine. Residue Asn-363 is glycosylated (N-linked (GlcNAc...) asparagine). Tyr-374 contributes to the substrate binding site. FAD contacts are provided by residues Glu-459 and Gly-466 to Thr-471. Residue Gly-466–Trp-467 coordinates substrate.

This sequence belongs to the flavin monoamine oxidase family. FIG1 subfamily. In terms of assembly, monomer. This is in contrast with most of its orthologs, that are non-covalently linked homodimers. It depends on FAD as a cofactor. In terms of tissue distribution, expressed by the venom gland.

Its subcellular location is the secreted. It carries out the reaction an L-alpha-amino acid + O2 + H2O = a 2-oxocarboxylate + H2O2 + NH4(+). The catalysed reaction is L-leucine + O2 + H2O = 4-methyl-2-oxopentanoate + H2O2 + NH4(+). In terms of biological role, catalyzes an oxidative deamination of predominantly hydrophobic and aromatic L-amino acids, thus producing hydrogen peroxide that may contribute to the diverse toxic effects of this enzyme. Shows activity on L-Leu. Damages cell membranes of the Gram-positive bacteria S.aureus (MIC=8 ug/ml and MBC=16 ug/ml) and the Gram-negative bacteria A.baumannii (MIC=16 ug/ml and MBC=32 ug/ml). This antimicrobial activity is dependent on the production of hydrogen peroxyde, since it is inhibited by catalase, a hydrogen peroxyde scavenger. This chain is L-amino acid oxidase Cdc18, found in Crotalus durissus cumanensis (South American rattlesnake).